Reading from the N-terminus, the 164-residue chain is Translation initiation factor IF-3 (164 aa).

It belongs to the IF-3 family. In terms of assembly, monomer.

The protein resides in the cytoplasm. IF-3 binds to the 30S ribosomal subunit and shifts the equilibrium between 70S ribosomes and their 50S and 30S subunits in favor of the free subunits, thus enhancing the availability of 30S subunits on which protein synthesis initiation begins. The protein is Translation initiation factor IF-3 of Bordetella bronchiseptica (strain ATCC BAA-588 / NCTC 13252 / RB50) (Alcaligenes bronchisepticus).